A 169-amino-acid polypeptide reads, in one-letter code: MEEWDLLNENRELTRKTHIRGEKLAPGELHLVVHVCIFNEKGQLLIQKRQKDKEGWPNYWDLSAAGSALKGETSRQAAEREVKEELGMTIDLSNTRAKFSYHFEAGFDDYWFITKDVELSDLTLQTEEVADVRFVTKEKLEALRSSGEFIPYFFLNQLFELKNATTIHF.

A Nudix hydrolase domain is found at 28 to 157 (ELHLVVHVCI…EFIPYFFLNQ (130 aa)). The Nudix box motif lies at 65-87 (AGSALKGETSRQAAEREVKEELG). Glu-81 and Glu-85 together coordinate Mg(2+).

Belongs to the Nudix hydrolase family. The cofactor is Mg(2+).

This is an uncharacterized protein from Listeria innocua serovar 6a (strain ATCC BAA-680 / CLIP 11262).